Here is a 215-residue protein sequence, read N- to C-terminus: Ribosomal RNA small subunit methyltransferase G (215 aa).

S-adenosyl-L-methionine is bound by residues Gly82, Met87, 133–134 (VE), and Arg148.

It belongs to the methyltransferase superfamily. RNA methyltransferase RsmG family.

The protein localises to the cytoplasm. It catalyses the reaction guanosine(527) in 16S rRNA + S-adenosyl-L-methionine = N(7)-methylguanosine(527) in 16S rRNA + S-adenosyl-L-homocysteine. Its function is as follows. Specifically methylates the N7 position of guanine in position 527 of 16S rRNA. This Stutzerimonas stutzeri (strain A1501) (Pseudomonas stutzeri) protein is Ribosomal RNA small subunit methyltransferase G.